The following is a 464-amino-acid chain: E3 ubiquitin-protein ligase RNF38 (464 aa).

The tract at residues methionine 1–histidine 94 is disordered. The Bipartite nuclear localization signal 1 signature appears at aspartate 6–phenylalanine 20. Positions methionine 38–histidine 53 are enriched in polar residues. Residues arginine 64–glutamate 79 carry the Bipartite nuclear localization signal 2 motif. Residues arginine 64–arginine 83 are compositionally biased toward basic residues. An RING-type zinc finger spans residues cysteine 412–arginine 453.

The protein localises to the nucleus. It catalyses the reaction S-ubiquitinyl-[E2 ubiquitin-conjugating enzyme]-L-cysteine + [acceptor protein]-L-lysine = [E2 ubiquitin-conjugating enzyme]-L-cysteine + N(6)-ubiquitinyl-[acceptor protein]-L-lysine.. The protein operates within protein modification; protein ubiquitination. In terms of biological role, acts as an E3 ubiquitin-protein ligase able to ubiquitinate p53/TP53 which promotes its relocalization to discrete foci associated with PML nuclear bodies. Exhibits preference for UBE2D2 as a E2 enzyme. The polypeptide is E3 ubiquitin-protein ligase RNF38 (Mus musculus (Mouse)).